A 190-amino-acid chain; its full sequence is Heme-binding protein 1 (190 aa).

This sequence belongs to the HEBP family. As to quaternary structure, monomer.

Its subcellular location is the cytoplasm. Its function is as follows. May bind free porphyrinogens that may be present in the cell and thus facilitate removal of these potentially toxic compound. Binds with a high affinity to one molecule of heme or porphyrins. It binds metalloporphyrins, free porphyrins and N-methylprotoporphyrin with similar affinities. The sequence is that of Heme-binding protein 1 (hebp1) from Xenopus tropicalis (Western clawed frog).